We begin with the raw amino-acid sequence, 1104 residues long: Valine--tRNA ligase, mitochondrial (1104 aa).

A mitochondrion-targeting transit peptide spans 1–47 (MNKWLNTLSKTFTFRLLNCHYRRSLPLCQNFSLKKSLTHNQVRFFKM). Ser73 is modified (phosphoserine). Residues 99 to 119 (KKNAAATTGASQKKPKKKKEV) are disordered. A 'HIGH' region motif is present at residues 190–200 (PNVTGALHIGH). Phosphoserine occurs at positions 294 and 332. The 'KMSKS' region motif lies at 703–707 (KMSKS). ATP is bound at residue Lys706. The residue at position 707 (Ser707) is a Phosphoserine. Thr1003 bears the Phosphothreonine mark.

The protein belongs to the class-I aminoacyl-tRNA synthetase family.

It localises to the cytoplasm. The protein localises to the mitochondrion. The enzyme catalyses tRNA(Val) + L-valine + ATP = L-valyl-tRNA(Val) + AMP + diphosphate. The polypeptide is Valine--tRNA ligase, mitochondrial (VAS1) (Saccharomyces cerevisiae (strain ATCC 204508 / S288c) (Baker's yeast)).